The primary structure comprises 124 residues: Ribonuclease pancreatic (124 aa).

Residues 1-13 (KESAAAKFERQHM) show a composition bias toward basic and acidic residues. The disordered stretch occupies residues 1 to 23 (KESAAAKFERQHMDPSASSISSS). Positions 7 and 10 each coordinate substrate. The active-site Proton acceptor is the H12. Disulfide bonds link C26–C84, C40–C95, C58–C110, and C65–C72. N34 is a glycosylation site (N-linked (GlcNAc...) asparagine). Residues 41 to 45 (KPVNT), K66, and R85 each bind substrate. The active-site Proton donor is the H119.

It belongs to the pancreatic ribonuclease family. In terms of assembly, monomer. Interacts with and forms tight 1:1 complexes with RNH1. Dimerization of two such complexes may occur. Interaction with RNH1 inhibits this protein. In terms of tissue distribution, pancreas.

It is found in the secreted. The enzyme catalyses an [RNA] containing cytidine + H2O = an [RNA]-3'-cytidine-3'-phosphate + a 5'-hydroxy-ribonucleotide-3'-[RNA].. It carries out the reaction an [RNA] containing uridine + H2O = an [RNA]-3'-uridine-3'-phosphate + a 5'-hydroxy-ribonucleotide-3'-[RNA].. In terms of biological role, endonuclease that catalyzes the cleavage of RNA on the 3' side of pyrimidine nucleotides. Acts on single-stranded and double-stranded RNA. This chain is Ribonuclease pancreatic (RNASE1), found in Alces alces alces (European moose).